The primary structure comprises 408 residues: uncharacterized protein (408 aa).

Disordered stretches follow at residues 218–265 (EPTA…TSER) and 367–408 (MESE…ETPN). Low complexity predominate over residues 369–379 (SEVINSSSSTS). A compositionally biased stretch (acidic residues) spans 394 to 408 (IVEEVPETAENETPN).

It to C.elegans C05E11.1.

This is an uncharacterized protein from Arabidopsis thaliana (Mouse-ear cress).